The sequence spans 460 residues: Ammonium transporter Rh type C (460 aa).

At 1 to 9 (MIWNTNLRW) the chain is on the cytoplasmic side. The helical transmembrane segment at 10–30 (RLPVACLLLEVALIALFGVFV) threads the bilayer. Residues 31-61 (RYDMDADPHWVQEKVIKNLSTDLENEFYYRY) lie on the Extracellular side of the membrane. N-linked (GlcNAc...) asparagine glycosylation occurs at Asn48. The chain crosses the membrane as a helical span at residues 62–82 (PSFQDVHVMIFVGFGFLMTFL). At 83–89 (QRYGYSS) the chain is on the cytoplasmic side. A helical membrane pass occupies residues 90–110 (VGFNFLLAAFGIQWALLMQGW). Residues 111-125 (LQSFDGRYILVDLEN) lie on the Extracellular side of the membrane. A helical transmembrane segment spans residues 126-145 (LINADFCVGSVCVAFGAVLG). Residues 146–151 (KVSPVQ) are Cytoplasmic-facing. Residues 152–174 (LLIMTLFQVTLFSINEYILLNLL) traverse the membrane as a helical segment. Over 175-179 (EVKDS) the chain is Extracellular. The chain crosses the membrane as a helical span at residues 180–200 (GGSMTIHAFGAYFGLTVAWIL). At 201 to 219 (YRPNLHLSKERQSSTYHSD) the chain is on the cytoplasmic side. The chain crosses the membrane as a helical span at residues 220–240 (LFAMIGTLFLWMYWPSFNSAI). Residues 241-251 (SNHGDAQHRAA) lie on the Extracellular side of the membrane. The chain crosses the membrane as a helical span at residues 252-272 (INTYCSLAACVLTSVALSSAL). Residues 273–285 (HRKGKLDMVHIQN) lie on the Cytoplasmic side of the membrane. The helical transmembrane segment at 286-303 (ATLAGGVGLGTVAELMVL) threads the bilayer. The Extracellular segment spans residues 304 to 306 (PFG). Residues 307-329 (SLIIGFVCGIVSTLGFVYLTPFL) form a helical membrane-spanning segment. The Cytoplasmic segment spans residues 330–346 (ESRLHIQDTCGVHNLHG). The helical transmembrane segment at 347–367 (IPGIIGGIAGAVTASIANIDL) threads the bilayer. Residues 368–396 (YGEEGLAYAFGIERSKLNWSPNMQGRFQA) lie on the Extracellular side of the membrane. Residues 397 to 417 (AGLFVSLAMALVGGVIVGVIL) traverse the membrane as a helical segment. At 418 to 460 (RLPFWGQAPDENCFEDAVYWEIPKEPKSTALRSEDSSIKPPEP) the chain is on the cytoplasmic side.

This sequence belongs to the ammonium transporter (TC 2.A.49) family. Rh subfamily. As to quaternary structure, homotrimer. Post-translationally, N-glycosylated.

The protein resides in the apical cell membrane. The enzyme catalyses NH4(+)(in) = NH4(+)(out). It catalyses the reaction methylamine(out) = methylamine(in). The catalysed reaction is CO2(out) = CO2(in). Functionally, ammonium transporter involved in the maintenance of acid-base homeostasis. Transports ammonium and its related derivative methylammonium across the plasma membrane of epithelial cells likely contributing to renal transepithelial ammonia transport and ammonia metabolism. Postulated to primarily mediate an electroneutral bidirectional transport of NH3 ammonia species according to a mechanism that implies interaction of an NH4(+) ion with acidic residues of the pore entry followed by dissociation of NH4(+) into NH3 and H(+). As a result NH3 transits through the central pore and is protonated on the extracellular side reforming NH4(+). May act as a CO2 channel providing for renal acid secretion. The polypeptide is Ammonium transporter Rh type C (RHCG) (Bos taurus (Bovine)).